The chain runs to 348 residues: tRNA N6-adenosine threonylcarbamoyltransferase (348 aa).

Fe cation is bound by residues H115 and H119. Substrate contacts are provided by residues 138–142, D171, G184, and N276; that span reads LVSGG. D304 provides a ligand contact to Fe cation.

The protein belongs to the KAE1 / TsaD family. Requires Fe(2+) as cofactor.

It is found in the cytoplasm. It carries out the reaction L-threonylcarbamoyladenylate + adenosine(37) in tRNA = N(6)-L-threonylcarbamoyladenosine(37) in tRNA + AMP + H(+). In terms of biological role, required for the formation of a threonylcarbamoyl group on adenosine at position 37 (t(6)A37) in tRNAs that read codons beginning with adenine. Is involved in the transfer of the threonylcarbamoyl moiety of threonylcarbamoyl-AMP (TC-AMP) to the N6 group of A37, together with TsaE and TsaB. TsaD likely plays a direct catalytic role in this reaction. The polypeptide is tRNA N6-adenosine threonylcarbamoyltransferase (Xylella fastidiosa (strain 9a5c)).